The chain runs to 344 residues: MTAREGRAPRVRRVAVYGAVGLAAIAGVAIWSGAASHRGADTARLSADAAARDGASAAPPPPARPASAGMPSPLAGSSAPRLPLDAAGHLAKSRAVRDFFDYCLSARSDLSATALDALVVREIAAQLDGTMAQPEALDVWHRYRAYLDALAKLPDAGAVDKSDLGALQLALDQRVSIAYRTLGDWSQPFFGAEQWRQRYDLARLKIAQDRTLTEAQKAERLAALAQQMPGDERAARQKADRQQAAIDQIAQLQKSGATPDAMRAQLTQTLGPDAAARVAQMQQDDASWQSRYADYAAQRAQIEAAGLSPQDRDAQIAALRQRMFTKPGEAVRAASLDRGAAAAR.

The helical transmembrane segment at 14–34 threads the bilayer; that stretch reads VAVYGAVGLAAIAGVAIWSGA. A compositionally biased stretch (low complexity) spans 45 to 57; that stretch reads LSADAAARDGASA. Positions 45-78 are disordered; sequence LSADAAARDGASAAPPPPARPASAGMPSPLAGSS.

The protein belongs to the lipase chaperone family.

The protein resides in the cell inner membrane. Its function is as follows. May be involved in the folding of the extracellular lipase during its passage through the periplasm. This chain is Lipase chaperone, found in Burkholderia ambifaria (strain ATCC BAA-244 / DSM 16087 / CCUG 44356 / LMG 19182 / AMMD) (Burkholderia cepacia (strain AMMD)).